A 403-amino-acid polypeptide reads, in one-letter code: uncharacterized protein (403 aa).

Transmembrane regions (helical) follow at residues 29–49 (FVIFSVLFSLIIGFIASCGFL) and 55–75 (AFIASGLCFALLVSVVSFFGC).

It belongs to the chlamydial CPn_0129/CT_036/TC_0306 family.

Its subcellular location is the cell membrane. This is an uncharacterized protein from Chlamydia trachomatis serovar D (strain ATCC VR-885 / DSM 19411 / UW-3/Cx).